A 195-amino-acid chain; its full sequence is Pyruvoyl-dependent arginine decarboxylase AaxB (195 aa).

The residue at position 53 (Ser53) is a Pyruvic acid (Ser).

The protein belongs to the pyruvoyl-dependent arginine decarboxylase family. In terms of assembly, trimer of an alpha-beta dimer. The cofactor is pyruvate.

It is found in the cytoplasm. The catalysed reaction is L-arginine + H(+) = agmatine + CO2. In terms of biological role, part of the AaxABC system, catalyzes the decarboxylation of L-arginine. The arginine uptake by the bacterium in the macrophage may be a virulence factor against the host innate immune response. The polypeptide is Pyruvoyl-dependent arginine decarboxylase AaxB (aaxB) (Chlamydia caviae (strain ATCC VR-813 / DSM 19441 / 03DC25 / GPIC) (Chlamydophila caviae)).